The primary structure comprises 691 residues: Transcription termination factor Rho (691 aa).

The interval 48–303 (ISDHQRGGSV…PEVDETELTE (256 aa)) is disordered. Positions 50–64 (DHQRGGSVADRDAAE) are enriched in basic and acidic residues. 2 stretches are compositionally biased toward low complexity: residues 65 to 92 (RAAQ…PAAE) and 105 to 119 (DTSA…QPQA). Basic and acidic residues-rich tracts occupy residues 120 to 158 (EARE…SERR) and 188 to 273 (DADR…EGGR). Positions 307–390 (LQPVAGILDV…VKISSVNGQP (84 aa)) constitute a Rho RNA-BD domain. Residues 433-438 (GKGQRG), 445-450 (KAGKTM), and R476 contribute to the ATP site.

It belongs to the Rho family. In terms of assembly, homohexamer. The homohexamer assembles into an open ring structure.

Facilitates transcription termination by a mechanism that involves Rho binding to the nascent RNA, activation of Rho's RNA-dependent ATPase activity, and release of the mRNA from the DNA template. The sequence is that of Transcription termination factor Rho from Micrococcus luteus (Micrococcus lysodeikticus).